Reading from the N-terminus, the 1202-residue chain is Ribonuclease P protein component, mitochondrial (1202 aa).

A mitochondrion-targeting transit peptide spans 1 to 122; it reads MAFKSFIYSK…NNNNNQHRYY (122 aa). Residues 109–134 form a disordered region; the sequence is NYVNNNNNNQHRYYSTGPTLPTNQYD. The segment covering 118–134 has biased composition (polar residues); the sequence is QHRYYSTGPTLPTNQYD.

In terms of assembly, consists of an RNA moiety (RPM1) and the protein component (RPM2). Both are necessary for full enzymatic activity.

It is found in the mitochondrion. It catalyses the reaction Endonucleolytic cleavage of RNA, removing 5'-extranucleotides from tRNA precursor.. In terms of biological role, ribonuclease P generates mature tRNA molecules by cleaving their 5'-ends. This chain is Ribonuclease P protein component, mitochondrial (RPM2), found in Saccharomyces cerevisiae (strain ATCC 204508 / S288c) (Baker's yeast).